A 140-amino-acid chain; its full sequence is Type II secretion system core protein G (140 aa).

A propeptide spans 1 to 6 (leader sequence); sequence MQRQRG. N-methylphenylalanine is present on F7. The chain crosses the membrane as a helical span at residues 7-27; sequence FTLLEIMVVIVILGVLASLVV. A disordered region spans residues 120-140; the sequence is LGPDGVPESNDDIGNWTIGKK.

The protein belongs to the GSP G family. In terms of assembly, type II secretion system is composed of four main components: the outer membrane complex, the inner membrane complex, the cytoplasmic secretion ATPase and the periplasm-spanning pseudopilus. Forms homomultimers. Post-translationally, cleaved by the prepilin peptidase. In terms of processing, methylated by prepilin peptidase at the amino group of the N-terminal phenylalanine once the leader sequence is cleaved.

The protein localises to the cell inner membrane. In terms of biological role, core component of the type II secretion system required for the energy-dependent secretion of extracellular factors such as proteases and toxins from the periplasm. Pseudopilin (pilin-like) protein that polymerizes to form the pseudopilus. Further polymerization triggers pseudopilus growth. The sequence is that of Type II secretion system core protein G (pulG) from Klebsiella pneumoniae.